The sequence spans 289 residues: Arabinogalactan O-methyltransferase 1 (289 aa).

A helical transmembrane segment spans residues 12 to 32 (IITGVLLAGLVGGALLFTSFI).

This sequence belongs to the methyltransferase superfamily. In terms of assembly, binds to the translation initiation factors TIF3E1.

Its subcellular location is the golgi apparatus membrane. Functionally, involved in the methylation of glucuronic acid of different plant cell wall component, but mainly on side chains of arabinogalactans. In Arabidopsis thaliana (Mouse-ear cress), this protein is Arabinogalactan O-methyltransferase 1 (AGM1).